A 95-amino-acid polypeptide reads, in one-letter code: Large ribosomal subunit protein eL43 (95 aa).

Residues 38-59 (CPDCGSEAVSREGTGIWQCGKC) form a C4-type zinc finger.

Belongs to the eukaryotic ribosomal protein eL43 family. It depends on Zn(2+) as a cofactor.

The polypeptide is Large ribosomal subunit protein eL43 (Halobacterium salinarum (strain ATCC 29341 / DSM 671 / R1)).